Consider the following 243-residue polypeptide: UPF0758 protein AM1_4368 (243 aa).

The region spanning 113–235 (VIDDPAVAAA…FTSLRQTTSL (123 aa)) is the MPN domain. 3 residues coordinate Zn(2+): His184, His186, and Asp197. Positions 184 to 197 (HNHPSGQTDPSPED) match the JAMM motif motif.

Belongs to the UPF0758 family.

This is UPF0758 protein AM1_4368 from Acaryochloris marina (strain MBIC 11017).